The following is a 105-amino-acid chain: Large ribosomal subunit protein bL21 (105 aa).

The protein belongs to the bacterial ribosomal protein bL21 family. As to quaternary structure, part of the 50S ribosomal subunit. Contacts protein L20.

Its function is as follows. This protein binds to 23S rRNA in the presence of protein L20. In Treponema pallidum (strain Nichols), this protein is Large ribosomal subunit protein bL21.